A 397-amino-acid polypeptide reads, in one-letter code: Succinate--CoA ligase [ADP-forming] subunit beta (397 aa).

The region spanning 9-253 (KEILASYGVR…IREENPIEVE (245 aa)) is the ATP-grasp domain. ATP is bound by residues Lys50, 57-59 (GRG), Val106, and Glu116. Asn208 and Asp222 together coordinate Mg(2+). Substrate-binding positions include Asn273 and 330–332 (GIV).

This sequence belongs to the succinate/malate CoA ligase beta subunit family. Heterotetramer of two alpha and two beta subunits. Requires Mg(2+) as cofactor.

It catalyses the reaction succinate + ATP + CoA = succinyl-CoA + ADP + phosphate. The enzyme catalyses GTP + succinate + CoA = succinyl-CoA + GDP + phosphate. It functions in the pathway carbohydrate metabolism; tricarboxylic acid cycle; succinate from succinyl-CoA (ligase route): step 1/1. In terms of biological role, succinyl-CoA synthetase functions in the citric acid cycle (TCA), coupling the hydrolysis of succinyl-CoA to the synthesis of either ATP or GTP and thus represents the only step of substrate-level phosphorylation in the TCA. The beta subunit provides nucleotide specificity of the enzyme and binds the substrate succinate, while the binding sites for coenzyme A and phosphate are found in the alpha subunit. This Flavobacterium johnsoniae (strain ATCC 17061 / DSM 2064 / JCM 8514 / BCRC 14874 / CCUG 350202 / NBRC 14942 / NCIMB 11054 / UW101) (Cytophaga johnsonae) protein is Succinate--CoA ligase [ADP-forming] subunit beta.